Here is a 494-residue protein sequence, read N- to C-terminus: MIKFALALTLCLAGASLSLAQHNPQWWGNRNTIVHLFEWKWSDIAEECETFLAPRGFAGVQVSPVNENIISSGRPWWERYQPISYKLTTRSGNEEEFADMVRRCNDVGIRIYVDVLLNHMSGDFDGVAVGTAGTEAEPSKKSFPGVPYTAQDFHPSCEITDWNDRFQVQECELVGLKDLNQHSDYVRSKLIEFLDHLIELGVAGFRVDAAKHMASEDLEYIYGSLSNLNIDHGFPHNARPFIFQEVIDHGHETVSREEYNELGAVTEFRFSEEIGKAFRGNNALKWLQSWGTDWGFLKSEQALTFVDNHDNQRDQGAVLNYKSPRQYKMATAFHLAYPYGISRVMSSFAFDDHDTPPPQDAQENIISPEFDEDGVCVNGWICEHRWRQIYAMVGFKNAVRDTELHGWWDNGDNQISFCRGNKGFLAVNNNLYDLSQELNTCLPAGEYCDVTSGSLIDGACTGKSVTVNEHGYGYIHIGSDDFDGVLALHVNAKV.

A signal peptide spans 1 to 20 (MIKFALALTLCLAGASLSLA). The residue at position 21 (Gln-21) is a Pyrrolidone carboxylic acid. Residues Cys-48 and Cys-104 are joined by a disulfide bond. The Ca(2+) site is built by Asn-118, Gln-169, and Asp-178. A disulfide bond links Cys-157 and Cys-171. Arg-206 is a binding site for chloride. Asp-208 functions as the Nucleophile in the catalytic mechanism. His-212 is a Ca(2+) binding site. Glu-245 acts as the Proton donor in catalysis. Chloride contacts are provided by Asn-308 and Arg-343. Cystine bridges form between Cys-376–Cys-382, Cys-418–Cys-441, and Cys-448–Cys-460.

It belongs to the glycosyl hydrolase 13 family. Monomer. It depends on Ca(2+) as a cofactor. Chloride is required as a cofactor.

It localises to the secreted. It catalyses the reaction Endohydrolysis of (1-&gt;4)-alpha-D-glucosidic linkages in polysaccharides containing three or more (1-&gt;4)-alpha-linked D-glucose units.. The chain is Alpha-amylase-related protein (Amyrel) from Drosophila serrata (Fruit fly).